The following is a 31-amino-acid chain: GQLALKQQTVNRLLNKIYSPISDAYSELKQL.

It belongs to the tyrosinase family. Hemocyanin subfamily. Hemolymph.

The protein localises to the secreted. It localises to the extracellular space. Its function is as follows. Hemocyanins are copper-containing oxygen carriers occurring freely dissolved in the hemolymph of many mollusks and arthropods. This is Hemocyanin subunit 2 from Maja squinado (Mediterranean spider crab).